The primary structure comprises 356 residues: DNA polymerase IV (356 aa).

Positions 6-187 constitute a UmuC domain; it reads IIHIDMDYFF…LDIGDFPGVG (182 aa). Asp-10 and Asp-105 together coordinate Mg(2+). Residue Glu-106 is part of the active site.

It belongs to the DNA polymerase type-Y family. As to quaternary structure, monomer. Requires Mg(2+) as cofactor.

The protein localises to the cytoplasm. It carries out the reaction DNA(n) + a 2'-deoxyribonucleoside 5'-triphosphate = DNA(n+1) + diphosphate. Poorly processive, error-prone DNA polymerase involved in untargeted mutagenesis. Copies undamaged DNA at stalled replication forks, which arise in vivo from mismatched or misaligned primer ends. These misaligned primers can be extended by PolIV. Exhibits no 3'-5' exonuclease (proofreading) activity. May be involved in translesional synthesis, in conjunction with the beta clamp from PolIII. This chain is DNA polymerase IV, found in Staphylococcus aureus (strain Mu50 / ATCC 700699).